We begin with the raw amino-acid sequence, 50 residues long: Protein HokE (50 aa).

The chain crosses the membrane as a helical span at residues 5–25; the sequence is YALVAVIVLCLTVLGFTLLVG.

This sequence belongs to the Hok/Gef family.

Its subcellular location is the cell inner membrane. In terms of biological role, toxic component of a type I toxin-antitoxin (TA) system. When overexpressed kills cells within minutes; causes collapse of the transmembrane potential and arrest of respiration. Its toxic effect is probably neutralized by an antisense antitoxin Sok RNA. The chain is Protein HokE (hokE) from Escherichia coli O157:H7.